Here is a 466-residue protein sequence, read N- to C-terminus: Asparagine--tRNA ligase (466 aa).

The protein belongs to the class-II aminoacyl-tRNA synthetase family. In terms of assembly, homodimer.

Its subcellular location is the cytoplasm. It carries out the reaction tRNA(Asn) + L-asparagine + ATP = L-asparaginyl-tRNA(Asn) + AMP + diphosphate + H(+). In Shewanella sediminis (strain HAW-EB3), this protein is Asparagine--tRNA ligase.